A 405-amino-acid polypeptide reads, in one-letter code: Imidazolonepropionase (405 aa).

Residues histidine 73 and histidine 75 each contribute to the Fe(3+) site. Residues histidine 73 and histidine 75 each contribute to the Zn(2+) site. Residues arginine 82, tyrosine 145, and histidine 178 each coordinate 4-imidazolone-5-propanoate. Residue tyrosine 145 participates in N-formimidoyl-L-glutamate binding. Histidine 243 is a binding site for Fe(3+). Histidine 243 is a binding site for Zn(2+). Glutamine 246 is a 4-imidazolone-5-propanoate binding site. Aspartate 318 contacts Fe(3+). A Zn(2+)-binding site is contributed by aspartate 318. N-formimidoyl-L-glutamate is bound by residues asparagine 320 and glycine 322. Residue threonine 323 coordinates 4-imidazolone-5-propanoate.

This sequence belongs to the metallo-dependent hydrolases superfamily. HutI family. Zn(2+) is required as a cofactor. Requires Fe(3+) as cofactor.

It localises to the cytoplasm. It carries out the reaction 4-imidazolone-5-propanoate + H2O = N-formimidoyl-L-glutamate. It participates in amino-acid degradation; L-histidine degradation into L-glutamate; N-formimidoyl-L-glutamate from L-histidine: step 3/3. Its function is as follows. Catalyzes the hydrolytic cleavage of the carbon-nitrogen bond in imidazolone-5-propanoate to yield N-formimidoyl-L-glutamate. It is the third step in the universal histidine degradation pathway. This chain is Imidazolonepropionase, found in Brucella suis biovar 1 (strain 1330).